Reading from the N-terminus, the 118-residue chain is Vesicle-associated membrane protein 1 (118 aa).

Residues methionine 1–alanine 15 are compositionally biased toward low complexity. The tract at residues methionine 1–glutamine 36 is disordered. At methionine 1 to lysine 96 the chain is on the cytoplasmic side. Residues arginine 33–lysine 93 enclose the v-SNARE coiled-coil homology domain. Serine 63 bears the Phosphoserine mark. The helical; Anchor for type IV membrane protein transmembrane segment at methionine 97–phenylalanine 116 threads the bilayer. The Vesicular portion of the chain corresponds to phenylalanine 117 to alanine 118.

This sequence belongs to the synaptobrevin family. As to quaternary structure, interacts with VAPA and VAPB.

Its subcellular location is the cytoplasmic vesicle. The protein localises to the secretory vesicle. The protein resides in the synaptic vesicle membrane. It is found in the synapse. It localises to the synaptosome. Its subcellular location is the cytoplasmic vesicle membrane. Involved in the targeting and/or fusion of transport vesicles to their target membrane. In Bos taurus (Bovine), this protein is Vesicle-associated membrane protein 1 (VAMP1).